We begin with the raw amino-acid sequence, 473 residues long: Fumarate hydratase class II (473 aa).

Residues 104–106 (SGT), 128–131 (HPND), 138–140 (SSN), and threonine 186 contribute to the substrate site. Histidine 187 functions as the Proton donor/acceptor in the catalytic mechanism. Serine 318 is a catalytic residue. Substrate contacts are provided by residues serine 319 and 324–326 (KVN).

Belongs to the class-II fumarase/aspartase family. Fumarase subfamily. In terms of assembly, homotetramer.

It is found in the cytoplasm. It carries out the reaction (S)-malate = fumarate + H2O. It participates in carbohydrate metabolism; tricarboxylic acid cycle; (S)-malate from fumarate: step 1/1. Involved in the TCA cycle. Catalyzes the stereospecific interconversion of fumarate to L-malate. This Corynebacterium glutamicum (strain ATCC 13032 / DSM 20300 / JCM 1318 / BCRC 11384 / CCUG 27702 / LMG 3730 / NBRC 12168 / NCIMB 10025 / NRRL B-2784 / 534) protein is Fumarate hydratase class II.